A 1065-amino-acid chain; its full sequence is Isoleucine--tRNA ligase (1065 aa).

The short motif at 49 to 59 is the 'HIGH' region element; it reads PYVSGAIHLGT. A 'KMSKS' region motif is present at residues 625–629; the sequence is KMSKS. Lys-628 is a binding site for ATP.

Belongs to the class-I aminoacyl-tRNA synthetase family. IleS type 2 subfamily. As to quaternary structure, monomer. The cofactor is Zn(2+).

It localises to the cytoplasm. The enzyme catalyses tRNA(Ile) + L-isoleucine + ATP = L-isoleucyl-tRNA(Ile) + AMP + diphosphate. In terms of biological role, catalyzes the attachment of isoleucine to tRNA(Ile). As IleRS can inadvertently accommodate and process structurally similar amino acids such as valine, to avoid such errors it has two additional distinct tRNA(Ile)-dependent editing activities. One activity is designated as 'pretransfer' editing and involves the hydrolysis of activated Val-AMP. The other activity is designated 'posttransfer' editing and involves deacylation of mischarged Val-tRNA(Ile). This chain is Isoleucine--tRNA ligase, found in Thermococcus kodakarensis (strain ATCC BAA-918 / JCM 12380 / KOD1) (Pyrococcus kodakaraensis (strain KOD1)).